The following is a 44-amino-acid chain: Cytochrome b559 subunit beta (44 aa).

The chain crosses the membrane as a helical span at residues 19 to 35; sequence WLAVHTLGVPTVFFLGA. His-23 is a heme binding site.

This sequence belongs to the PsbE/PsbF family. As to quaternary structure, heterodimer of an alpha subunit and a beta subunit. PSII is composed of 1 copy each of membrane proteins PsbA, PsbB, PsbC, PsbD, PsbE, PsbF, PsbH, PsbI, PsbJ, PsbK, PsbL, PsbM, PsbT, PsbX, PsbY, PsbZ, Psb30/Ycf12, peripheral proteins PsbO, CyanoQ (PsbQ), PsbU, PsbV and a large number of cofactors. It forms dimeric complexes. The cofactor is heme b.

It is found in the cellular thylakoid membrane. Its function is as follows. This b-type cytochrome is tightly associated with the reaction center of photosystem II (PSII). PSII is a light-driven water:plastoquinone oxidoreductase that uses light energy to abstract electrons from H(2)O, generating O(2) and a proton gradient subsequently used for ATP formation. It consists of a core antenna complex that captures photons, and an electron transfer chain that converts photonic excitation into a charge separation. The polypeptide is Cytochrome b559 subunit beta (Trichodesmium erythraeum (strain IMS101)).